Reading from the N-terminus, the 1378-residue chain is Tonsoku-like protein (1378 aa).

TPR repeat units follow at residues 27–60 (AALCHQLGELLAGHGRYAEALEQHWQELQLRERA), 67–100 (AVAHRKIGERLAEMEDYPAALQHQHQYLELAHSL), 107–147 (QRAW…VDEE), 162–195 (TRLYLNLGLTFESLQQTALCNDYFRKSIFLAEQN), 202–235 (FRARYNLGTIHWRAGQHSQAMRCLEGARECAHTM), 242–275 (SECCVVIAQVLQDLGDFLAAKRALKKAYRLGSQK), 311–344 (MVICEQLGDLFSKAGDFPRAAEAYQKQLRFAELL), and 352–385 (AIIHVSLATTLGDMKDHHGAVRHYEEELRLRSGN). Residues 475–524 (AATAESEALEAGEVELSEGEDDTDGLTPQLEEDEELQGHLGRRKGSKWNR) are disordered. Residues 481–509 (EALEAGEVELSEGEDDTDGLTPQLEEDEE) are compositionally biased toward acidic residues. Basic residues predominate over residues 514–523 (LGRRKGSKWN). ANK repeat units follow at residues 528–557 (MGETLLHRACIEGQLRRVQDLVRQGHPLNP), 561–590 (CGWTPLHEACNYGHLEIVRFLLDHGAAVDD), and 597–626 (EGITPLHDALNCGHFEVAELLLERGASVTL). Residues 667 to 789 (AASGQDPHSS…REAATASTSR (123 aa)) are disordered. Residues 672–684 (DPHSSQAFHTPSS) show a composition bias toward polar residues. The segment covering 691 to 702 (TSPPLSPCPEPP) has biased composition (pro residues). Residue serine 719 is modified to Phosphoserine. Low complexity-rich tracts occupy residues 736–753 (GPASSSSSSEGEDSAGPA) and 777–789 (ASNREAATASTSR). Arginine 797 bears the Omega-N-methylarginine mark. The disordered stretch occupies residues 842 to 933 (LTRSRRPRPR…PLGPAPPPPI (92 aa)). 2 stretches are compositionally biased toward polar residues: residues 883–899 (CMQSCSAPVNAGPSSLA) and 907–918 (STPRVSEPSGDS). LRR repeat units follow at residues 1069-1093 (HTALRELRLAGNRLGDKCVAELVAA), 1097-1122 (MPSLALLDLSSNHLGPEGLRQLAMGL), 1128-1151 (LQSLEELDLSMNPLGDGCGQSLAS), 1188-1212 (AEHLKTLSLSYNALGAPALARTLQS), 1247-1270 (GCALAHLTLSANHLGDKAVRDLCR), 1275-1300 (CPSLISLDLSANPEISCASLEELLST), and 1331-1354 (AAQLRELQLCSRRLCAEDRDALRQ).

Belongs to the Tonsoku family. Component of the MMS22L-TONSL complex, a complex at least composed of MMS22L and TONSL/NFKBIL2. Interacts with the MCM complex, the FACT complex and the RPA complex. Interacts with MCM5; the interaction is direct. Binds histones, with a strong preference for histone H3.1 (histones H3.1 and H3-4/H3.1t). Interacts (via ANK repeats) with histone H4; specifically binds histone H4 lacking methylation at 'Lys-20' (H4K20me0). May interact with DNAJC9; the interaction seems to be histone-dependent. As to expression, expressed in heart, skeletal muscle and tracheal epithelial cells.

It is found in the nucleus. Its subcellular location is the chromosome. The protein localises to the cytoplasm. Functionally, component of the MMS22L-TONSL complex, a complex that promotes homologous recombination-mediated repair of double-strand breaks (DSBs) at stalled or collapsed replication forks. The MMS22L-TONSL complex is required to maintain genome integrity during DNA replication. It mediates the assembly of RAD51 filaments on single-stranded DNA (ssDNA): the MMS22L-TONSL complex is recruited to DSBs following histone replacement by histone chaperones and eviction of the replication protein A complex (RPA/RP-A) from DSBs. Following recruitment to DSBs, the TONSL-MMS22L complex promotes recruitment of RAD51 filaments and subsequent homologous recombination. Within the complex, TONSL acts as a histone reader, which recognizes and binds newly synthesized histones following their replacement by histone chaperones. Specifically binds histone H4 lacking methylation at 'Lys-20' (H4K20me0) and histone H3.1. The sequence is that of Tonsoku-like protein from Homo sapiens (Human).